Here is a 208-residue protein sequence, read N- to C-terminus: Small ribosomal subunit protein uS5 (208 aa).

Positions 1–21 (MSDREQRDGGRSAENNNDRKG) are enriched in basic and acidic residues. The disordered stretch occupies residues 1-38 (MSDREQRDGGRSAENNNDRKGRNNGRRNDRRNHQDNER). The S5 DRBM domain maps to 41-104 (YIERVVTINR…EEARKNFFRV (64 aa)).

It belongs to the universal ribosomal protein uS5 family. In terms of assembly, part of the 30S ribosomal subunit. Contacts proteins S4 and S8.

In terms of biological role, with S4 and S12 plays an important role in translational accuracy. Its function is as follows. Located at the back of the 30S subunit body where it stabilizes the conformation of the head with respect to the body. This is Small ribosomal subunit protein uS5 from Corynebacterium aurimucosum (strain ATCC 700975 / DSM 44827 / CIP 107346 / CN-1) (Corynebacterium nigricans).